The primary structure comprises 258 residues: MLKVRVIPCLDVKDGRVVKGVQFVDLRDAGDPVEAARAYDLAGADELTFLDITASHENRGTILDVVRRTAEQCFMPLTVGGGVRTVDDVRTLLHAGADKVSINTAAVNRRAFVGEAAEKFGEQCIVVAIDAKRVSKEGEENRWEIFTHGGRTPTGIDAIQFAREVVDLGAGEILLTSMDRDGTGQGFDCALTRAVADAVHVPVIASGGVGTLDHLVDGIREGGASAVLAASIFHFGTFTIREAKERLAEAGLPVRLDV.

Residues D11 and D130 contribute to the active site.

This sequence belongs to the HisA/HisF family. As to quaternary structure, heterodimer of HisH and HisF.

The protein localises to the cytoplasm. It carries out the reaction 5-[(5-phospho-1-deoxy-D-ribulos-1-ylimino)methylamino]-1-(5-phospho-beta-D-ribosyl)imidazole-4-carboxamide + L-glutamine = D-erythro-1-(imidazol-4-yl)glycerol 3-phosphate + 5-amino-1-(5-phospho-beta-D-ribosyl)imidazole-4-carboxamide + L-glutamate + H(+). Its pathway is amino-acid biosynthesis; L-histidine biosynthesis; L-histidine from 5-phospho-alpha-D-ribose 1-diphosphate: step 5/9. In terms of biological role, IGPS catalyzes the conversion of PRFAR and glutamine to IGP, AICAR and glutamate. The HisF subunit catalyzes the cyclization activity that produces IGP and AICAR from PRFAR using the ammonia provided by the HisH subunit. In Xanthobacter autotrophicus (strain ATCC BAA-1158 / Py2), this protein is Imidazole glycerol phosphate synthase subunit HisF.